We begin with the raw amino-acid sequence, 449 residues long: UDP-N-acetylmuramoylalanine--D-glutamate ligase (449 aa).

118-124 contributes to the ATP binding site; that stretch reads GTNGKTT.

It belongs to the MurCDEF family.

Its subcellular location is the cytoplasm. The enzyme catalyses UDP-N-acetyl-alpha-D-muramoyl-L-alanine + D-glutamate + ATP = UDP-N-acetyl-alpha-D-muramoyl-L-alanyl-D-glutamate + ADP + phosphate + H(+). The protein operates within cell wall biogenesis; peptidoglycan biosynthesis. Functionally, cell wall formation. Catalyzes the addition of glutamate to the nucleotide precursor UDP-N-acetylmuramoyl-L-alanine (UMA). In Staphylococcus aureus (strain MW2), this protein is UDP-N-acetylmuramoylalanine--D-glutamate ligase.